A 114-amino-acid chain; its full sequence is Ribosome-binding factor A (114 aa).

Belongs to the RbfA family. Monomer. Binds 30S ribosomal subunits, but not 50S ribosomal subunits or 70S ribosomes.

It localises to the cytoplasm. In terms of biological role, one of several proteins that assist in the late maturation steps of the functional core of the 30S ribosomal subunit. Associates with free 30S ribosomal subunits (but not with 30S subunits that are part of 70S ribosomes or polysomes). Required for efficient processing of 16S rRNA. May interact with the 5'-terminal helix region of 16S rRNA. This Staphylococcus saprophyticus subsp. saprophyticus (strain ATCC 15305 / DSM 20229 / NCIMB 8711 / NCTC 7292 / S-41) protein is Ribosome-binding factor A.